A 190-amino-acid chain; its full sequence is Elongation factor P-like protein (190 aa).

The protein belongs to the elongation factor P family.

This Shigella boydii serotype 4 (strain Sb227) protein is Elongation factor P-like protein.